We begin with the raw amino-acid sequence, 561 residues long: 4-coumarate--CoA ligase 3 (561 aa).

The ATP site is built by S213, S214, G215, T216, T217, and K221. (E)-4-coumaroyl-AMP-binding residues include Y263 and S267. Residue K284 participates in CoA binding. Positions 286–355 (EIGALLDLIQ…RRLPQAILGQ (70 aa)) are SBD1. Positions 333, 355, 356, 360, and 368 each coordinate (E)-4-coumaroyl-AMP. ATP contacts are provided by Q355, G356, and T360. Residues 356-423 (GYGMTEAGPV…IRGQQIMKEY (68 aa)) form an SBD2 region. Residues D444 and R459 each contribute to the ATP site. (E)-4-coumaroyl-AMP is bound by residues K461 and K465. The CoA site is built by K467 and G468. Position 550 (K550) interacts with ATP.

Belongs to the ATP-dependent AMP-binding enzyme family. Mg(2+) is required as a cofactor. In terms of tissue distribution, preferentially expressed in leaves, flowers and siliques.

It catalyses the reaction (E)-4-coumarate + ATP + CoA = (E)-4-coumaroyl-CoA + AMP + diphosphate. It carries out the reaction (E)-caffeate + ATP + CoA = (E)-caffeoyl-CoA + AMP + diphosphate. The enzyme catalyses (E)-ferulate + ATP + CoA = (E)-feruloyl-CoA + AMP + diphosphate. The catalysed reaction is (E)-4-coumarate + ATP + H(+) = (E)-4-coumaroyl-AMP + diphosphate. It catalyses the reaction (E)-4-coumaroyl-AMP + CoA = (E)-4-coumaroyl-CoA + AMP + H(+). It carries out the reaction (E)-caffeate + ATP + H(+) = (E)-caffeoyl-AMP + diphosphate. The enzyme catalyses (E)-caffeoyl-AMP + CoA = (E)-caffeoyl-CoA + AMP + H(+). The catalysed reaction is (E)-ferulate + ATP + H(+) = (E)-feruloyl-AMP + diphosphate. It catalyses the reaction (E)-feruloyl-AMP + CoA = (E)-feruloyl-CoA + AMP + H(+). It functions in the pathway phytoalexin biosynthesis; 3,4',5-trihydroxystilbene biosynthesis; 3,4',5-trihydroxystilbene from trans-4-coumarate: step 1/2. Its function is as follows. Produces CoA thioesters of a variety of hydroxy- and methoxy-substituted cinnamic acids, which are used to synthesize several phenylpropanoid-derived compounds, including anthocyanins, flavonoids, isoflavonoids, coumarins, lignin, suberin and wall-bound phenolics. Follows a two-step reaction mechanism, wherein the carboxylate substrate first undergoes adenylation by ATP, followed by a thioesterification in the presence of CoA to yield the final CoA thioesters. The polypeptide is 4-coumarate--CoA ligase 3 (Arabidopsis thaliana (Mouse-ear cress)).